A 458-amino-acid chain; its full sequence is MKPVVVILGRPNVGKSTLFNRLTRTQNALVDDMPGVTRDRLYGDVEWNGVFFSLVDTGGFLSGDDDFFMPHIQSQIHRAIDEADAVLLVFDGKSGISPFDREAMAFLQSASCPVFYLVNKIDSPEREVYTAEFFGLGLDNLYPVSGAHGYGVTDFLDDLVNALPETEPEPPADDMIKLAVVGRPNVGKSTLINRILGQERMIVSDVPGTTRESVDTVCEIDGRSYLLIDTAGLRRKSRVSVKLEKFSAIKTLKSLDRCDIALILVDAEEGVTDQDVTIAGYAFERGCGCIFLVNKWDLAKEQEKKAKTFYDDLQDQAKFLSFAPAVTISAATGFRVKKIFELIDAVHAQYTFNIKTGELNNIFERATRSKEPPFHKGRRLKFNYAVQVATGPPTFICFVNFPSGVHFSYKRYLINAIRRETGLDKTPIRLFFREKPGRIDFAALKPSEKRGGKKTRRK.

EngA-type G domains are found at residues 3-167 (PVVV…PETE) and 176-351 (IKLA…AQYT). Residues 9 to 16 (GRPNVGKS), 56 to 60 (DTGGF), 119 to 122 (NKID), 182 to 189 (GRPNVGKS), 229 to 233 (DTAGL), and 294 to 297 (NKWD) contribute to the GTP site. A KH-like domain is found at 352–436 (FNIKTGELNN…PIRLFFREKP (85 aa)).

It belongs to the TRAFAC class TrmE-Era-EngA-EngB-Septin-like GTPase superfamily. EngA (Der) GTPase family. Associates with the 50S ribosomal subunit.

In terms of biological role, GTPase that plays an essential role in the late steps of ribosome biogenesis. In Desulfosudis oleivorans (strain DSM 6200 / JCM 39069 / Hxd3) (Desulfococcus oleovorans), this protein is GTPase Der.